The primary structure comprises 577 residues: Multidrug transporter TPO1_2 (577 aa).

The disordered stretch occupies residues 1 to 63; sequence MSSTSSDRPY…ALSKNSTQTS (63 aa). N-linked (GlcNAc...) asparagine glycans are attached at residues N44 and N58. 12 helical membrane-spanning segments follow: residues 137–157, 167–187, 204–224, 234–254, 263–283, 293–313, 368–388, 406–426, 446–466, 475–495, 504–526, and 541–561; these read VMLC…SSIF, IYHV…LGFA, GVLV…ATAK, FFAG…FADM, AICL…VIGS, WLEY…LFFF, PLLL…YLLL, ELPY…IWWM, LLPM…FCWT, WIVP…IFLP, YLLI…GAAF, and YAGL…LLFL.

This sequence belongs to the major facilitator superfamily. DHA1 family. Polyamines/proton antiporter (TC 2.A.1.2.16) subfamily.

The protein resides in the cell membrane. Its function is as follows. Multidrug resistance transporter involved in resistance to azole antifungal drugs such as the imidazoles miconazole, ketoconazole, and tioconazole; as well as the triazoles itraconazole and fluconazole. Also plays a role in the resistance to other antifungal drug families such as the polyene amphotericin B, the pyrimide analog flucytosine, the fungicide mancozeb, and the polyamine spermine. Decreases the intracellular accumulation of clotrimazole by mediating its extrusion from cells. Plays a role in biofilm formation. The sequence is that of Multidrug transporter TPO1_2 from Candida glabrata (strain ATCC 2001 / BCRC 20586 / JCM 3761 / NBRC 0622 / NRRL Y-65 / CBS 138) (Yeast).